Here is a 173-residue protein sequence, read N- to C-terminus: Large ribosomal subunit protein uL10 (173 aa).

It belongs to the universal ribosomal protein uL10 family. As to quaternary structure, part of the ribosomal stalk of the 50S ribosomal subunit. The N-terminus interacts with L11 and the large rRNA to form the base of the stalk. The C-terminus forms an elongated spine to which L12 dimers bind in a sequential fashion forming a multimeric L10(L12)X complex.

Its function is as follows. Forms part of the ribosomal stalk, playing a central role in the interaction of the ribosome with GTP-bound translation factors. The protein is Large ribosomal subunit protein uL10 (rplJ) of Synechocystis sp. (strain ATCC 27184 / PCC 6803 / Kazusa).